The primary structure comprises 317 residues: MNNWNSITIKISREAEEAISALLIEAGSAGVEINDSADYLNHEDQFGEVLPEIEQSELVDITAYYPENMPIVELKAEIEHKIANLADYFSLTGLSVTTNNLSETNWAEAWKKYFEPARITHDLTIVPSWTKDYLATGSEKLIRLDPGMAFGTGTHPTTKMSLYALEQVLRGGETLLDVGTGSGVLSVAATYLGAAEIFAYDIDEVAVRVALENIELNPGHEKIHVSANNLLEGIDKKADVIVANILADILVLMTDDAFRLVKEEGYLIMSGIIADKADMVIASAENAGFFLETRLIQGEWNCLIFKKTENREGVIGG.

Residues Thr158, Gly179, Asp201, and Asn244 each coordinate S-adenosyl-L-methionine.

Belongs to the methyltransferase superfamily. PrmA family.

Its subcellular location is the cytoplasm. It catalyses the reaction L-lysyl-[protein] + 3 S-adenosyl-L-methionine = N(6),N(6),N(6)-trimethyl-L-lysyl-[protein] + 3 S-adenosyl-L-homocysteine + 3 H(+). Methylates ribosomal protein L11. The sequence is that of Ribosomal protein L11 methyltransferase from Lactococcus lactis subsp. cremoris (strain SK11).